Consider the following 210-residue polypeptide: Histidine biosynthesis bifunctional protein HisIE (210 aa).

Residues 1–106 form a phosphoribosyl-AMP cyclohydrolase region; that stretch reads MTKYKIDFSK…SCFNTEVPFS (106 aa). A phosphoribosyl-ATP pyrophosphohydrolase region spans residues 107 to 210; that stretch reads VQTLAQTVQD…KGERQNIEQW (104 aa).

In the N-terminal section; belongs to the PRA-CH family. The protein in the C-terminal section; belongs to the PRA-PH family.

Its subcellular location is the cytoplasm. The catalysed reaction is 1-(5-phospho-beta-D-ribosyl)-ATP + H2O = 1-(5-phospho-beta-D-ribosyl)-5'-AMP + diphosphate + H(+). It carries out the reaction 1-(5-phospho-beta-D-ribosyl)-5'-AMP + H2O = 1-(5-phospho-beta-D-ribosyl)-5-[(5-phospho-beta-D-ribosylamino)methylideneamino]imidazole-4-carboxamide. The protein operates within amino-acid biosynthesis; L-histidine biosynthesis; L-histidine from 5-phospho-alpha-D-ribose 1-diphosphate: step 2/9. Its pathway is amino-acid biosynthesis; L-histidine biosynthesis; L-histidine from 5-phospho-alpha-D-ribose 1-diphosphate: step 3/9. This is Histidine biosynthesis bifunctional protein HisIE (hisI) from Staphylococcus aureus (strain Mu50 / ATCC 700699).